A 584-amino-acid polypeptide reads, in one-letter code: Arginine--tRNA ligase (584 aa).

Residues 126 to 136 (PNIAKEMHVGH) carry the 'HIGH' region motif.

This sequence belongs to the class-I aminoacyl-tRNA synthetase family. Monomer.

Its subcellular location is the cytoplasm. The enzyme catalyses tRNA(Arg) + L-arginine + ATP = L-arginyl-tRNA(Arg) + AMP + diphosphate. This is Arginine--tRNA ligase from Synechococcus sp. (strain ATCC 27144 / PCC 6301 / SAUG 1402/1) (Anacystis nidulans).